A 243-amino-acid chain; its full sequence is Small ribosomal subunit protein eS4 (243 aa).

One can recognise an S4 RNA-binding domain in the interval 43-105; it reads IPLLYIVRDY…TGEHYRVLPN (63 aa).

The protein belongs to the eukaryotic ribosomal protein eS4 family. As to quaternary structure, part of the 30S ribosomal subunit.

This chain is Small ribosomal subunit protein eS4, found in Pyrococcus furiosus (strain ATCC 43587 / DSM 3638 / JCM 8422 / Vc1).